Consider the following 156-residue polypeptide: Small ribosomal subunit protein uS7 (156 aa).

Belongs to the universal ribosomal protein uS7 family. As to quaternary structure, part of the 30S ribosomal subunit. Contacts proteins S9 and S11.

Its function is as follows. One of the primary rRNA binding proteins, it binds directly to 16S rRNA where it nucleates assembly of the head domain of the 30S subunit. Is located at the subunit interface close to the decoding center, probably blocks exit of the E-site tRNA. In Rhodospirillum centenum (strain ATCC 51521 / SW), this protein is Small ribosomal subunit protein uS7.